Consider the following 72-residue polypeptide: Translation initiation factor IF-1 (72 aa).

The region spanning 1–72 (MAKSDVIEVE…SKGRITYRFK (72 aa)) is the S1-like domain.

This sequence belongs to the IF-1 family. As to quaternary structure, component of the 30S ribosomal translation pre-initiation complex which assembles on the 30S ribosome in the order IF-2 and IF-3, IF-1 and N-formylmethionyl-tRNA(fMet); mRNA recruitment can occur at any time during PIC assembly.

The protein resides in the cytoplasm. Its function is as follows. One of the essential components for the initiation of protein synthesis. Stabilizes the binding of IF-2 and IF-3 on the 30S subunit to which N-formylmethionyl-tRNA(fMet) subsequently binds. Helps modulate mRNA selection, yielding the 30S pre-initiation complex (PIC). Upon addition of the 50S ribosomal subunit IF-1, IF-2 and IF-3 are released leaving the mature 70S translation initiation complex. The polypeptide is Translation initiation factor IF-1 (Levilactobacillus brevis (strain ATCC 367 / BCRC 12310 / CIP 105137 / JCM 1170 / LMG 11437 / NCIMB 947 / NCTC 947) (Lactobacillus brevis)).